The chain runs to 201 residues: Potassium-transporting ATPase KdpC subunit (201 aa).

Residues 10 to 30 (VVLVVLTVICGLAYPLAMTGI) form a helical membrane-spanning segment. A disordered region spans residues 67 to 105 (HGRPSATSAADPADPTKTVSSPYNAANSSGSNLGPTSKA). The segment covering 70 to 82 (PSATSAADPADPT) has biased composition (low complexity). Polar residues predominate over residues 83-105 (KTVSSPYNAANSSGSNLGPTSKA).

The protein belongs to the KdpC family. The system is composed of three essential subunits: KdpA, KdpB and KdpC.

The protein resides in the cell inner membrane. Its function is as follows. Part of the high-affinity ATP-driven potassium transport (or Kdp) system, which catalyzes the hydrolysis of ATP coupled with the electrogenic transport of potassium into the cytoplasm. This subunit acts as a catalytic chaperone that increases the ATP-binding affinity of the ATP-hydrolyzing subunit KdpB by the formation of a transient KdpB/KdpC/ATP ternary complex. The chain is Potassium-transporting ATPase KdpC subunit from Rhodopseudomonas palustris (strain BisB5).